We begin with the raw amino-acid sequence, 530 residues long: UDP-N-acetylmuramoyl-L-alanyl-D-glutamate--2,6-diaminopimelate ligase (530 aa).

Residue Ser21 coordinates UDP-N-acetyl-alpha-D-muramoyl-L-alanyl-D-glutamate. An ATP-binding site is contributed by 99–105; the sequence is GTNGKSS. Residues 145 to 146, Ser172, Gln178, and Arg180 each bind UDP-N-acetyl-alpha-D-muramoyl-L-alanyl-D-glutamate; that span reads TT. Position 212 is an N6-carboxylysine (Lys212). Positions 221 to 269 constitute an RPE1 insert domain; that stretch reads FKPAYREEFKGDTEHSTTAYILVREDASTGSTSKLLLEAKFGKMSTEYL. Meso-2,6-diaminopimelate contacts are provided by residues Arg422, 446–449, Gly496, and Glu500; that span reads DNPR. The Meso-diaminopimelate recognition motif signature appears at 446 to 449; the sequence is DNPR.

This sequence belongs to the MurCDEF family. MurE subfamily. Mg(2+) is required as a cofactor. Post-translationally, carboxylation is probably crucial for Mg(2+) binding and, consequently, for the gamma-phosphate positioning of ATP.

Its subcellular location is the cytoplasm. It carries out the reaction UDP-N-acetyl-alpha-D-muramoyl-L-alanyl-D-glutamate + meso-2,6-diaminopimelate + ATP = UDP-N-acetyl-alpha-D-muramoyl-L-alanyl-gamma-D-glutamyl-meso-2,6-diaminopimelate + ADP + phosphate + H(+). It functions in the pathway cell wall biogenesis; peptidoglycan biosynthesis. Catalyzes the addition of meso-diaminopimelic acid to the nucleotide precursor UDP-N-acetylmuramoyl-L-alanyl-D-glutamate (UMAG) in the biosynthesis of bacterial cell-wall peptidoglycan. The chain is UDP-N-acetylmuramoyl-L-alanyl-D-glutamate--2,6-diaminopimelate ligase from Rickettsia felis (strain ATCC VR-1525 / URRWXCal2) (Rickettsia azadi).